Reading from the N-terminus, the 96-residue chain is Large ribosomal subunit protein eL43 (96 aa).

The C4-type zinc finger occupies 41-62 (CPVCGFMKLKRISTSIWECKKC).

It belongs to the eukaryotic ribosomal protein eL43 family. Requires Zn(2+) as cofactor.

The polypeptide is Large ribosomal subunit protein eL43 (Methanococcus aeolicus (strain ATCC BAA-1280 / DSM 17508 / OCM 812 / Nankai-3)).